A 429-amino-acid polypeptide reads, in one-letter code: Histidinol dehydrogenase (429 aa).

Y131, Q193, and N216 together coordinate NAD(+). S239, Q261, and H264 together coordinate substrate. Zn(2+) contacts are provided by Q261 and H264. Catalysis depends on proton acceptor residues E327 and H328. Residues H328, D361, E415, and H420 each coordinate substrate. Residue D361 participates in Zn(2+) binding. Residue H420 participates in Zn(2+) binding.

The protein belongs to the histidinol dehydrogenase family. The cofactor is Zn(2+).

The enzyme catalyses L-histidinol + 2 NAD(+) + H2O = L-histidine + 2 NADH + 3 H(+). Its pathway is amino-acid biosynthesis; L-histidine biosynthesis; L-histidine from 5-phospho-alpha-D-ribose 1-diphosphate: step 9/9. In terms of biological role, catalyzes the sequential NAD-dependent oxidations of L-histidinol to L-histidinaldehyde and then to L-histidine. In Methanocaldococcus jannaschii (strain ATCC 43067 / DSM 2661 / JAL-1 / JCM 10045 / NBRC 100440) (Methanococcus jannaschii), this protein is Histidinol dehydrogenase (hisD).